Reading from the N-terminus, the 830-residue chain is Nucleolar complex-associated protein 3 (830 aa).

Disordered stretches follow at residues M1–E22, K67–E86, K112–P169, G391–D436, and L802–I830. Coiled coils occupy residues V61 to E81 and K111 to D156. The segment covering K67–N84 has biased composition (basic and acidic residues). The segment covering A118–E129 has biased composition (acidic residues). Residues D130–R140 show a composition bias toward basic and acidic residues. The Nuclear localization signal 1 motif lies at Q138–K145. Positions E141–A150 are enriched in basic residues. Positions D159–T168 are enriched in acidic residues. A compositionally biased stretch (basic and acidic residues) spans G391–N400. Positions N400–D429 form a coiled coil. A Nuclear localization signal 2 motif is present at residues K408–Q415. Positions E420–D436 are enriched in basic and acidic residues. The short motif at E806 to Q813 is the Nuclear localization signal 3 element. Over residues V817–I830 the composition is skewed to basic residues.

This sequence belongs to the CBF/MAK21 family. As to quaternary structure, component of nucleolar complexes. Interacts with RBL and NOC2 in both the nucleolus and nucleoplasm.

The protein resides in the nucleus. Its subcellular location is the nucleolus. The protein localises to the nucleoplasm. May be required for synthesis of 60S ribosomal subunits and the transport of pre-ribosomes from the nucleoplasm to the cytoplasm. Also required for initiation of DNA replication. This is Nucleolar complex-associated protein 3 from Arabidopsis thaliana (Mouse-ear cress).